A 276-amino-acid chain; its full sequence is NADPH-dependent 7-cyano-7-deazaguanine reductase (276 aa).

Position 83–85 (83–85 (IES)) interacts with substrate. Position 85-86 (85-86 (SK)) interacts with NADPH. Catalysis depends on Cys184, which acts as the Thioimide intermediate. Catalysis depends on Asp191, which acts as the Proton donor. 223-224 (HE) is a substrate binding site. 252–253 (RG) contacts NADPH.

Belongs to the GTP cyclohydrolase I family. QueF type 2 subfamily. Homodimer.

The protein resides in the cytoplasm. It catalyses the reaction 7-aminomethyl-7-carbaguanine + 2 NADP(+) = 7-cyano-7-deazaguanine + 2 NADPH + 3 H(+). Its pathway is tRNA modification; tRNA-queuosine biosynthesis. Functionally, catalyzes the NADPH-dependent reduction of 7-cyano-7-deazaguanine (preQ0) to 7-aminomethyl-7-deazaguanine (preQ1). The sequence is that of NADPH-dependent 7-cyano-7-deazaguanine reductase from Pseudomonas fluorescens (strain ATCC BAA-477 / NRRL B-23932 / Pf-5).